The sequence spans 349 residues: Nuclear distribution protein nudE homolog 1 (349 aa).

Positions 23 to 189 (AMKYKTCSEE…ELAVQQKQEK (167 aa)) form a coiled coil. Positions 182–201 (AVQQKQEKPKSNMGSPETER) are disordered.

The protein belongs to the nudE family. Self-associates. Interacts with pafah1b1. Phosphorylated in mitosis.

It localises to the cytoplasm. It is found in the cytoskeleton. The protein localises to the microtubule organizing center. The protein resides in the centrosome. Its subcellular location is the spindle. It localises to the chromosome. It is found in the centromere. The protein localises to the kinetochore. The protein resides in the cleavage furrow. Its subcellular location is the cytoplasmic vesicle membrane. Functionally, required for centrosome duplication and formation and function of the mitotic spindle. In Xenopus tropicalis (Western clawed frog), this protein is Nuclear distribution protein nudE homolog 1 (nde1).